Here is a 356-residue protein sequence, read N- to C-terminus: Mannonate dehydratase (356 aa).

The protein belongs to the mannonate dehydratase family. Requires Fe(2+) as cofactor. Mn(2+) serves as cofactor.

It catalyses the reaction D-mannonate = 2-dehydro-3-deoxy-D-gluconate + H2O. It functions in the pathway carbohydrate metabolism; pentose and glucuronate interconversion. In terms of biological role, catalyzes the dehydration of D-mannonate. This Levilactobacillus brevis (strain ATCC 367 / BCRC 12310 / CIP 105137 / JCM 1170 / LMG 11437 / NCIMB 947 / NCTC 947) (Lactobacillus brevis) protein is Mannonate dehydratase.